Reading from the N-terminus, the 144-residue chain is Large ribosomal subunit protein uL15 (144 aa).

The interval 1–48 is disordered; sequence MIKLESLQDPSPRKRRTKLLGRGPSSGHGKTSCRGHKGDGSRSGYKRR.

The protein belongs to the universal ribosomal protein uL15 family. Part of the 50S ribosomal subunit.

In terms of biological role, binds to the 23S rRNA. The chain is Large ribosomal subunit protein uL15 from Chlamydia abortus (strain DSM 27085 / S26/3) (Chlamydophila abortus).